The sequence spans 394 residues: Flap endonuclease 1 (394 aa).

The segment at 1–104 (MGIKQLFSII…GELAKRFQRK (104 aa)) is N-domain. Asp34 contributes to the Mg(2+) binding site. Residues Arg47 and Arg70 each coordinate DNA. Residues Asp86, Glu158, Glu160, Asp179, and Asp181 each contribute to the Mg(2+) site. Residues 122-253 (DVEKFSRRTV…STALKLIREH (132 aa)) are I-domain. A DNA-binding site is contributed by Glu158. The DNA site is built by Gly231 and Asp233. Asp233 lines the Mg(2+) pocket. Positions 341 to 349 (QQARIEGFF) are interaction with PCNA. The segment covering 356 to 383 (EEEKKAHKRKLEEQAEQKRKKVKEEKKE) has biased composition (basic and acidic residues). Residues 356 to 394 (EEEKKAHKRKLEEQAEQKRKKVKEEKKEKAKLKAKPRGA) form a disordered region. A compositionally biased stretch (basic residues) spans 384–394 (KAKLKAKPRGA).

The protein belongs to the XPG/RAD2 endonuclease family. FEN1 subfamily. Interacts with PCNA. Three molecules of FEN1 bind to one PCNA trimer with each molecule binding to one PCNA monomer. PCNA stimulates the nuclease activity without altering cleavage specificity. Mg(2+) is required as a cofactor. Post-translationally, phosphorylated. Phosphorylation upon DNA damage induces relocalization to the nuclear plasma.

The protein localises to the nucleus. The protein resides in the nucleolus. It localises to the nucleoplasm. It is found in the mitochondrion. Functionally, structure-specific nuclease with 5'-flap endonuclease and 5'-3' exonuclease activities involved in DNA replication and repair. During DNA replication, cleaves the 5'-overhanging flap structure that is generated by displacement synthesis when DNA polymerase encounters the 5'-end of a downstream Okazaki fragment. It enters the flap from the 5'-end and then tracks to cleave the flap base, leaving a nick for ligation. Also involved in the long patch base excision repair (LP-BER) pathway, by cleaving within the apurinic/apyrimidinic (AP) site-terminated flap. Acts as a genome stabilization factor that prevents flaps from equilibrating into structures that lead to duplications and deletions. Also possesses 5'-3' exonuclease activity on nicked or gapped double-stranded DNA, and exhibits RNase H activity. Also involved in replication and repair of rDNA and in repairing mitochondrial DNA. The sequence is that of Flap endonuclease 1 from Sordaria macrospora (strain ATCC MYA-333 / DSM 997 / K(L3346) / K-hell).